Consider the following 551-residue polypeptide: MISPDPRPSPGLARWAESYEAKCERRQEIRESRRCRPNVTTCRQVGKTLRIQQREQLQRARLQQFFRRRNLELEEKGKAQHPQAREQGPSRRPGQVTVLKEPLSCARRISSPREQVTGTSSEVFPAQHPPPSGICRDLSDHLSSQAGGLPPQDTPIKKPPKHHRGTQTKAEGPTIKNDASQQTNYGVAVLDKEIIQLSDYLKEALQRELVLKQKMVILQDLLSTLIQASDSSWKGQLNEDKLKGKLRSLENQLYTCTQKYSPWGMKKVLLEMEDQKNSYEQKAKESLQKVLEEKMNAEQQLQSTQRSLALAEQKCEEWRSQYEALKEDWRTLGTQHRELESQLHVLQSKLQGADSRDLQMNQALRFLENEHQQLQAKIECLQGDRDLCSLDTQDLQDQLKRSEAEKLTLVTRVQQLQGLLQNQSLQLQEQEKLLTKKDQALPVWSPKSFPNEVEPEGTGKEKDWDLRDQLQKKTLQLQAKEKECRELHSELDNLSDEYLSCLRKLQHCREELNQSQQLPPRRQCGRWLPVLMVVIAAALAVFLANKDNLMI.

The Cytoplasmic portion of the chain corresponds to methionine 1 to arginine 526. Disordered stretches follow at residues leucine 73–glutamine 95 and aspartate 140–aspartate 178. 2 coiled-coil regions span residues aspartate 240–lysine 436 and tryptophan 464–glutamine 506. The chain crosses the membrane as a helical; Anchor for type IV membrane protein span at residues tryptophan 527–alanine 544. The Extracellular portion of the chain corresponds to asparagine 545–isoleucine 551.

As to quaternary structure, interacts (via its coiled-coil domain) with TRAF3 (via isoleucine zipper). Interacts with MAP2K1. Interacts with PPP2CA; this interaction targets PPP2CA to the lysosomes. Interacts with TLR4. Interacts with MAVS. Interacts with TBK1.

Its subcellular location is the cell membrane. The protein resides in the golgi apparatus membrane. It localises to the lysosome membrane. The protein localises to the mitochondrion outer membrane. Adapter protein that plays essential roles in both innate and adaptive immunity. Plays a crucial role in the regulation of thymocyte development. Mechanistically, mediates TCR-stimulated activation through recruiting MAP2K1/MEK1 to the Golgi and, thereby, facilitating the interaction of MAP2K1/MEK1 with its activator BRAF. Also plays an essential role in regulatory T-cell stability and function by recruiting the serine-threonine phosphatase catalytic subunit (PPP2CA) to the lysosome, thereby facilitating the interaction of PP2Ac with the mTORC1 component RPTOR and restricting glycolytic metabolism. Positively regulates TLR4 signaling activity in macrophage-mediated inflammation by acting as a molecular clamp to facilitate LPS-induced translocation of TLR4 to lipid rafts. In response to viral infection, facilitates the recruitment of TRAF3 to MAVS within mitochondria leading to IRF3 activation and interferon production. However, participates in the maintenance of immune homeostasis and the prevention of overzealous innate immunity by promoting 'Lys-48'-dependent ubiquitination of TBK1. This Homo sapiens (Human) protein is TRAF3-interacting JNK-activating modulator (TRAF3IP3).